The sequence spans 205 residues: Holliday junction branch migration complex subunit RuvA (205 aa).

The segment at 1–64 is domain I; it reads MIGKLKGTID…EDQLRLFGFL (64 aa). A domain II region spans residues 65–143; that stretch reads SALEREWFRL…AFAGEMSASI (79 aa). The flexible linker stretch occupies residues 144–153; sequence GLKQELGEGV. A domain III region spans residues 153-205; sequence VAAAPVSDAVSALTNLGYSRDQAANAVAAALKNGGEGGDSAKLIRLGLKELAR.

It belongs to the RuvA family. Homotetramer. Forms an RuvA(8)-RuvB(12)-Holliday junction (HJ) complex. HJ DNA is sandwiched between 2 RuvA tetramers; dsDNA enters through RuvA and exits via RuvB. An RuvB hexamer assembles on each DNA strand where it exits the tetramer. Each RuvB hexamer is contacted by two RuvA subunits (via domain III) on 2 adjacent RuvB subunits; this complex drives branch migration. In the full resolvosome a probable DNA-RuvA(4)-RuvB(12)-RuvC(2) complex forms which resolves the HJ.

The protein resides in the cytoplasm. The RuvA-RuvB-RuvC complex processes Holliday junction (HJ) DNA during genetic recombination and DNA repair, while the RuvA-RuvB complex plays an important role in the rescue of blocked DNA replication forks via replication fork reversal (RFR). RuvA specifically binds to HJ cruciform DNA, conferring on it an open structure. The RuvB hexamer acts as an ATP-dependent pump, pulling dsDNA into and through the RuvAB complex. HJ branch migration allows RuvC to scan DNA until it finds its consensus sequence, where it cleaves and resolves the cruciform DNA. The chain is Holliday junction branch migration complex subunit RuvA from Sinorhizobium fredii (strain NBRC 101917 / NGR234).